A 94-amino-acid chain; its full sequence is Pyrimidine/purine nucleoside phosphorylase (94 aa).

The protein belongs to the nucleoside phosphorylase PpnP family.

The enzyme catalyses a purine D-ribonucleoside + phosphate = a purine nucleobase + alpha-D-ribose 1-phosphate. The catalysed reaction is adenosine + phosphate = alpha-D-ribose 1-phosphate + adenine. It carries out the reaction cytidine + phosphate = cytosine + alpha-D-ribose 1-phosphate. It catalyses the reaction guanosine + phosphate = alpha-D-ribose 1-phosphate + guanine. The enzyme catalyses inosine + phosphate = alpha-D-ribose 1-phosphate + hypoxanthine. The catalysed reaction is thymidine + phosphate = 2-deoxy-alpha-D-ribose 1-phosphate + thymine. It carries out the reaction uridine + phosphate = alpha-D-ribose 1-phosphate + uracil. It catalyses the reaction xanthosine + phosphate = alpha-D-ribose 1-phosphate + xanthine. Functionally, catalyzes the phosphorolysis of diverse nucleosides, yielding D-ribose 1-phosphate and the respective free bases. Can use uridine, adenosine, guanosine, cytidine, thymidine, inosine and xanthosine as substrates. Also catalyzes the reverse reactions. This chain is Pyrimidine/purine nucleoside phosphorylase, found in Pseudomonas putida (strain W619).